Consider the following 108-residue polypeptide: Insulin (108 aa).

Positions 1 to 24 (MALWMHLLPLLALLALWGPEPAPA) are cleaved as a signal peptide. Intrachain disulfides connect C31–C94, C43–C107, and C93–C98. The propeptide at 57–85 (EAEDLQVGQVELGGGSITGSLPPLEGPMQ) is c peptide.

It belongs to the insulin family. As to quaternary structure, heterodimer of a B chain and an A chain linked by two disulfide bonds.

The protein resides in the secreted. In terms of biological role, insulin decreases blood glucose concentration. It increases cell permeability to monosaccharides, amino acids and fatty acids. It accelerates glycolysis, the pentose phosphate cycle, and glycogen synthesis in liver. In Aotus trivirgatus (Three-striped night monkey), this protein is Insulin (INS).